Reading from the N-terminus, the 953-residue chain is Isoleucine--tRNA ligase (953 aa).

Positions proline 57 to histidine 67 match the 'HIGH' region motif. Residue glutamate 582 coordinates L-isoleucyl-5'-AMP. The short motif at lysine 623 to serine 627 is the 'KMSKS' region element. Lysine 626 provides a ligand contact to ATP. Zn(2+) contacts are provided by cysteine 916, cysteine 919, cysteine 936, and cysteine 939.

This sequence belongs to the class-I aminoacyl-tRNA synthetase family. IleS type 1 subfamily. Monomer. It depends on Zn(2+) as a cofactor.

It localises to the cytoplasm. The enzyme catalyses tRNA(Ile) + L-isoleucine + ATP = L-isoleucyl-tRNA(Ile) + AMP + diphosphate. Its function is as follows. Catalyzes the attachment of isoleucine to tRNA(Ile). As IleRS can inadvertently accommodate and process structurally similar amino acids such as valine, to avoid such errors it has two additional distinct tRNA(Ile)-dependent editing activities. One activity is designated as 'pretransfer' editing and involves the hydrolysis of activated Val-AMP. The other activity is designated 'posttransfer' editing and involves deacylation of mischarged Val-tRNA(Ile). The sequence is that of Isoleucine--tRNA ligase from Bordetella petrii (strain ATCC BAA-461 / DSM 12804 / CCUG 43448).